A 395-amino-acid chain; its full sequence is Cyclic AMP-responsive element-binding protein 3-like protein 4 (395 aa).

Over 1-295 (MDLGIPDLLD…QTSNKAAQTS (295 aa)) the chain is Cytoplasmic. A disordered region spans residues 82 to 108 (EASPGSDSGISEDPCHPDSPPAPRATS). The 64-residue stretch at 217–280 (VLKKVRRKIR…ISLVAQLRQL (64 aa)) folds into the bZIP domain. A basic motif region spans residues 219-248 (KKVRRKIRNKQSAQDSRRRKKEYIDGLESR). The tract at residues 259 to 280 (LQKKVQELERHNISLVAQLRQL) is leucine-zipper. Residues 296 to 316 (TCVLILLFSLALIILPSFSPF) form a helical; Signal-anchor for type II membrane protein membrane-spanning segment. Residues 317–395 (QSRPEAGSED…IRSVLHADEM (79 aa)) are Lumenal-facing. The segment at 355–395 (RLREPPGAKDANGSTRTLLEKMGGKPRPSGRIRSVLHADEM) is disordered. The N-linked (GlcNAc...) asparagine glycan is linked to Asn-366.

Belongs to the bZIP family. ATF subfamily. As to quaternary structure, binds DNA as a dimer. N-glycosylated in the C-terminal region. Post-translationally, controlled by regulated intramembrane proteolysis (RIP). Following ER stress a fragment containing the cytoplasmic transcription factor domain is released by proteolysis. The cleavage seems to be performed sequentially by site-1 and site-2 proteases (PS1 and PS2). PS1 cleavage may be suppressed by a determinant in the C-terminal region. According to PubMed:11830526, exclusively expressed in the prostate. Expressed in breast and prostate cancer cell lines. Expressed in prostatic luminal epithelial cells (at protein level). Expression is significantly more abundant in prostate cancer than in benign prostatic tissue (prostatic hyperplasia). According to PubMed:12111373, also expressed in brain, pancreas and skeletal muscle, and at lower levels in small intestine, testis, leukocyte and thymus.

The protein resides in the endoplasmic reticulum membrane. Its subcellular location is the golgi apparatus membrane. It is found in the nucleus. Its function is as follows. Transcriptional activator that may play a role in the unfolded protein response. Binds to the UPR element (UPRE) but not to CRE element. Preferentially binds DNA with to the consensus sequence 5'-T[GT]ACGT[GA][GT]-3' and has transcriptional activation activity from UPRE. Binds to NF-kappa-B site and has transcriptional activation activity from NF-kappa-B-containing regulatory elements. The protein is Cyclic AMP-responsive element-binding protein 3-like protein 4 (CREB3L4) of Homo sapiens (Human).